The chain runs to 142 residues: Hemoglobin subunit epsilon (142 aa).

A Globin domain is found at 3–142 (HFTAEEKAAI…KLVSAVAIAL (140 aa)). Phosphoserine is present on residues Ser14 and Ser51. Heme b is bound by residues His64 and His93.

Belongs to the globin family. As to quaternary structure, heterotetramer of two alpha chains and two epsilon chains in early embryonic hemoglobin Gower-2; two zeta chains and two epsilon chains in early embryonic hemoglobin Gower-1. In terms of tissue distribution, red blood cells.

Its function is as follows. The epsilon chain is a beta-type chain of early mammalian embryonic hemoglobin. The polypeptide is Hemoglobin subunit epsilon (HBE1) (Callithrix geoffroyi (Geoffroy's marmoset)).